Consider the following 928-residue polypeptide: MEAPTPLLLLVLLTTITFFTTSVADDQTAMLALAKSFNPPPSDWSSTTDFCKWSGVRCTGGRVTTISLADKSLTGFIAPEISTLSELKSVSIQRNKLSGTIPSFAKLSSLQEIYMDENNFVGVETGAFAGLTSLQILSLSDNNNITTWSFPSELVDSTSLTTIYLDNTNIAGVLPDIFDSLASLQNLRLSYNNITGVLPPSLGKSSIQNLWINNQDLGMSGTIEVLSSMTSLSQAWLHKNHFFGPIPDLSKSENLFDLQLRDNDLTGIVPPTLLTLASLKNISLDNNKFQGPLPLFSPEVKVTIDHNVFCTTKAGQSCSPQVMTLLAVAGGLGYPSMLAESWQGDDACSGWAYVSCDSAGKNVVTLNLGKHGFTGFISPAIANLTSLKSLYLNGNDLTGVIPKELTFMTSLQLIDVSNNNLRGEIPKFPATVKFSYKPGNALLGTNGGDGSSPGTGGASGGPGGSSGGGGSKVGVIVGVIVAVLVFLAILGFVVYKFVMKRKYGRFNRTDPEKVGKILVSDAVSNGGSGNGGYANGHGANNFNALNSPSSGDNSDRFLLEGGSVTIPMEVLRQVTNNFSEDNILGRGGFGVVYAGELHDGTKTAVKRMECAAMGNKGMSEFQAEIAVLTKVRHRHLVALLGYCVNGNERLLVYEYMPQGNLGQHLFEWSELGYSPLTWKQRVSIALDVARGVEYLHSLAQQSFIHRDLKPSNILLGDDMRAKVADFGLVKNAPDGKYSVETRLAGTFGYLAPEYAATGRVTTKVDVYAFGVVLMEILTGRKALDDSLPDERSHLVTWFRRILINKENIPKALDQTLEADEETMESIYRVAELAGHCTAREPQQRPDMGHAVNVLGPLVEKWKPSCQEEEESFGIDVNMSLPQALQRWQNEGTSSSTMFHGDFSYSQTQSSIPPKASGFPNTFDSADGR.

The signal sequence occupies residues 1-24 (MEAPTPLLLLVLLTTITFFTTSVA). The Extracellular segment spans residues 25-472 (DDQTAMLALA…GGSSGGGGSK (448 aa)). Cys-51 and Cys-58 are oxidised to a cystine. LRR repeat units follow at residues 61 to 84 (GRVT…ISTL), 85 to 107 (SELK…FAKL), 108 to 130 (SSLQ…AFAG), 132 to 157 (TSLQ…LVDS), 158 to 180 (TSLT…IFDS), 181 to 205 (LASL…LGKS), 207 to 229 (IQNL…LSSM), 230 to 251 (TSLS…DLSK), 252 to 276 (SENL…LLTL), and 278 to 298 (SLKN…LFSP). Asn-144 carries N-linked (GlcNAc...) asparagine glycosylation. Asn-193 carries N-linked (GlcNAc...) asparagine glycosylation. N-linked (GlcNAc...) asparagine glycosylation is present at Asn-281. 2 cysteine pairs are disulfide-bonded: Cys-310–Cys-318 and Cys-348–Cys-356. LRR repeat units follow at residues 360-383 (GKNV…AIAN), 384-407 (LTSL…ELTF), and 408-435 (MTSL…VKFS). Asn-383 is a glycosylation site (N-linked (GlcNAc...) asparagine). A disordered region spans residues 445 to 465 (TNGGDGSSPGTGGASGGPGGS). A helical transmembrane segment spans residues 473 to 493 (VGVIVGVIVAVLVFLAILGFV). The Cytoplasmic segment spans residues 494 to 928 (VYKFVMKRKY…PNTFDSADGR (435 aa)). Residues 578–858 (FSEDNILGRG…HAVNVLGPLV (281 aa)) form the Protein kinase domain. Residues 584 to 592 (LGRGGFGVV) and Lys-606 contribute to the ATP site. Asp-707 acts as the Proton acceptor in catalysis. 2 stretches are compositionally biased toward polar residues: residues 898 to 911 (FHGD…QSSI) and 918 to 928 (FPNTFDSADGR). Residues 898-928 (FHGDFSYSQTQSSIPPKASGFPNTFDSADGR) are disordered.

It belongs to the protein kinase superfamily. Ser/Thr protein kinase family. Interacts with BAK1 (via kinase domain), SERK4 and SERK5. As to expression, expressed in roots, leaves, stems, siliques and flowers. Ubiquitous, with a high expression in mature pollen grains and in the pericycle and the xylem vasculature of the primary and lateral roots.

It localises to the membrane. The enzyme catalyses L-seryl-[protein] + ATP = O-phospho-L-seryl-[protein] + ADP + H(+). It carries out the reaction L-threonyl-[protein] + ATP = O-phospho-L-threonyl-[protein] + ADP + H(+). Involved in auxin signal transduction and cell expansion and proliferation regulation. May be involved in brassinosteroid-mediated plant growth and development via auxin regulation. May be involved in microspore and pollen development. In Arabidopsis thaliana (Mouse-ear cress), this protein is Receptor-like kinase TMK4.